A 521-amino-acid polypeptide reads, in one-letter code: Biotinidase (521 aa).

The N-terminal stretch at 1-25 (MSGARTAHALVFLLGCSALALGVCS) is a signal peptide. The CN hydrolase domain occupies 50–329 (NPLELSSRQQ…QGLVGTENTT (280 aa)). The active-site Proton acceptor is glutamate 90. N-linked (GlcNAc...) asparagine glycosylation is found at asparagine 128 and asparagine 181. Lysine 190 acts as the Proton donor in catalysis. Cysteine 223 serves as the catalytic Nucleophile. N-linked (GlcNAc...) asparagine glycosylation occurs at asparagine 380.

This sequence belongs to the carbon-nitrogen hydrolase superfamily. BTD/VNN family.

The protein resides in the secreted. It is found in the extracellular space. It carries out the reaction biocytin + H2O = biotin + L-lysine. The enzyme catalyses biotin amide + H2O = biotin + NH4(+). Functionally, catalytic release of biotin from biocytin, the product of biotin-dependent carboxylases degradation. This is Biotinidase from Rattus norvegicus (Rat).